A 155-amino-acid polypeptide reads, in one-letter code: Pre-hexon-linking protein VIII (155 aa).

Positions 44 to 84 (GVHRTKDIKPEDLVGRGIQLNSYQPPTTRLKPERVFQLAGG) are excised as a propeptide.

Belongs to the adenoviridae hexon-linking protein family. As to quaternary structure, interacts with the peripentonal hexons as well as the hexons in the facets. Part of a complex composed of the core-capsid bridging protein, the endosome lysis protein VI and the hexon-linking protein VIII; these interactions bridge the virus core to the capsid. Post-translationally, cleaved by the viral protease during virion maturation. May cause the middle segment to be shed from the capsid.

The protein localises to the virion. The protein resides in the host nucleus. Structural component of the virion that acts as a cement protein on the capsid interior and which glue the peripentonal hexons and group-of-nine hexons together. The polypeptide is Pre-hexon-linking protein VIII (Bos taurus (Bovine)).